A 152-amino-acid chain; its full sequence is SsrA-binding protein (152 aa).

The segment covering 132 to 142 has biased composition (basic and acidic residues); sequence REAIKKRDVSD. The tract at residues 132–152 is disordered; the sequence is REAIKKRDVSDQIRSSLRRSR.

This sequence belongs to the SmpB family.

The protein localises to the cytoplasm. Its function is as follows. Required for rescue of stalled ribosomes mediated by trans-translation. Binds to transfer-messenger RNA (tmRNA), required for stable association of tmRNA with ribosomes. tmRNA and SmpB together mimic tRNA shape, replacing the anticodon stem-loop with SmpB. tmRNA is encoded by the ssrA gene; the 2 termini fold to resemble tRNA(Ala) and it encodes a 'tag peptide', a short internal open reading frame. During trans-translation Ala-aminoacylated tmRNA acts like a tRNA, entering the A-site of stalled ribosomes, displacing the stalled mRNA. The ribosome then switches to translate the ORF on the tmRNA; the nascent peptide is terminated with the 'tag peptide' encoded by the tmRNA and targeted for degradation. The ribosome is freed to recommence translation, which seems to be the essential function of trans-translation. This is SsrA-binding protein from Bdellovibrio bacteriovorus (strain ATCC 15356 / DSM 50701 / NCIMB 9529 / HD100).